Consider the following 116-residue polypeptide: Ribosome-binding factor A (116 aa).

This sequence belongs to the RbfA family. In terms of assembly, monomer. Binds 30S ribosomal subunits, but not 50S ribosomal subunits or 70S ribosomes.

The protein resides in the cytoplasm. Functionally, one of several proteins that assist in the late maturation steps of the functional core of the 30S ribosomal subunit. Associates with free 30S ribosomal subunits (but not with 30S subunits that are part of 70S ribosomes or polysomes). Required for efficient processing of 16S rRNA. May interact with the 5'-terminal helix region of 16S rRNA. The chain is Ribosome-binding factor A from Mycoplasma pneumoniae (strain ATCC 29342 / M129 / Subtype 1) (Mycoplasmoides pneumoniae).